The primary structure comprises 405 residues: Replication factor C large subunit (405 aa).

47–54 is an ATP binding site; the sequence is GPPGVGKT.

Belongs to the activator 1 small subunits family. RfcL subfamily. In terms of assembly, heteromultimer composed of small subunits (RfcS) and large subunits (RfcL).

Functionally, part of the RFC clamp loader complex which loads the PCNA sliding clamp onto DNA. The chain is Replication factor C large subunit from Saccharolobus islandicus (strain L.S.2.15 / Lassen #1) (Sulfolobus islandicus).